Reading from the N-terminus, the 65-residue chain is Metallothionein-B (65 aa).

This sequence belongs to the metallothionein superfamily. Type 4 family.

Functionally, metallothioneins have a high content of cysteine residues that bind various heavy metals. This is Metallothionein-B (MTB1) from Strongylocentrotus purpuratus (Purple sea urchin).